Here is a 270-residue protein sequence, read N- to C-terminus: Cerberus (270 aa).

A signal peptide spans Met1–Gly20. N-linked (GlcNAc...) asparagine glycans are attached at residues Asn103, Asn112, and Asn154. 4 cysteine pairs are disulfide-bonded: Cys169/Cys215, Cys183/Cys229, Cys193/Cys245, and Cys197/Cys247. One can recognise a CTCK domain in the interval Cys169 to Asn253. The N-linked (GlcNAc...) asparagine glycan is linked to Asn228.

Belongs to the DAN family. In terms of assembly, the long chain interacts with nodal/nr-1, bmp4 and wnt8, thereby inhibiting their function. The short chain interacts with nodal/nr-1 but not bmp4 or wnt8. A component of the Nieuwkoop signaling center in the blastula. Expressed transiently in a broad anterior domain of the gastrula, including the anterior endoderm of the Spemann's organizer and more laterally the cardiac primordia. Expression is excluded from the prospective prechordal plate region and the ring of cells that give rise to the trunk-tail mesoderm.

It localises to the secreted. In terms of biological role, inhibits wnt, nodal/nr-1 and bmp signaling in the embryo to promote head formation and anterior neural induction. Within the endoderm, acts as an essential mediator of nodal/nr-1-induced cardiogenesis in the overlying mesoderm. In Xenopus laevis (African clawed frog), this protein is Cerberus.